An 847-amino-acid polypeptide reads, in one-letter code: Guanine nucleotide exchange factor VAV3 (847 aa).

Positions 1–119 (MEPWKQCAQW…ETLSRLSRTP (119 aa)) constitute a Calponin-homology (CH) domain. Position 141 is a phosphotyrosine (Tyr-141). Residues 192–371 (IRSCCLAEIK…KDLAQYVNEV (180 aa)) form the DH domain. One can recognise a PH domain in the interval 400 to 502 (RPQGDGEIRI…WLEQFEMALS (103 aa)). Residues 513–562 (FHDFKMHTFTRVTSCKVCQMLLRGTFYQGYLCFKCGARAHKECLGRVDNC) form a Phorbol-ester/DAG-type zinc finger. A sufficient for interaction with ROS1 region spans residues 560 to 847 (DNCGRVNSGE…FPSTYVEEDE (288 aa)). The region spanning 592 to 660 (PGLPKMQVIR…PSDAVKPCPC (69 aa)) is the SH3 1 domain. The region spanning 672–766 (WYAGAMERLQ…TLDTTLQFPY (95 aa)) is the SH2 domain. Positions 788 to 847 (KVLGIAIARYDFCARDMRELSLLKGDVVKIYTKMSANGWWRGEVNGRVGWFPSTYVEEDE) constitute an SH3 2 domain.

In terms of assembly, interacts with the PH domain of SH2B2. Interacts (via SH2 domains) with the phosphorylated form of EPHA2. Interacts with ROS1; constitutive interaction that mediates VAV3 phosphorylation. Post-translationally, phosphorylated. Phosphorylation can be mediated by ROS1. In osteoclasts, undergoes tyrosine phosphorylation in response to CSF1. In terms of tissue distribution, isoform 1 and isoform 3 are widely expressed; both are expressed at very low levels in skeletal muscle. In keratinocytes, isoform 1 is less abundant than isoform 3. Isoform 3 is detected at very low levels, if any, in adrenal gland, bone marrow, spleen, fetal brain and spinal cord; in these tissues, isoform 1 is readily detectable.

Functionally, exchange factor for GTP-binding proteins RhoA, RhoG and, to a lesser extent, Rac1. Binds physically to the nucleotide-free states of those GTPases. Plays an important role in angiogenesis. Its recruitment by phosphorylated EPHA2 is critical for EFNA1-induced RAC1 GTPase activation and vascular endothelial cell migration and assembly. May be important for integrin-mediated signaling, at least in some cell types. In osteoclasts, along with SYK tyrosine kinase, required for signaling through integrin alpha-v/beta-1 (ITAGV-ITGB1), a crucial event for osteoclast proper cytoskeleton organization and function. This signaling pathway involves RAC1, but not RHO, activation. Necessary for proper wound healing. In the course of wound healing, required for the phagocytotic cup formation preceding macrophage phagocytosis of apoptotic neutrophils. Responsible for integrin beta-2 (ITGB2)-mediated macrophage adhesion and, to a lesser extent, contributes to beta-3 (ITGB3)-mediated adhesion. Does not affect integrin beta-1 (ITGB1)-mediated adhesion. This is Guanine nucleotide exchange factor VAV3 (VAV3) from Homo sapiens (Human).